The following is a 530-amino-acid chain: Arginine--tRNA ligase (530 aa).

The short motif at 113 to 123 is the 'HIGH' region element; that stretch reads ANPTGPLHIGH.

Belongs to the class-I aminoacyl-tRNA synthetase family. Monomer.

Its subcellular location is the cytoplasm. The catalysed reaction is tRNA(Arg) + L-arginine + ATP = L-arginyl-tRNA(Arg) + AMP + diphosphate. This is Arginine--tRNA ligase from Campylobacter jejuni subsp. jejuni serotype O:23/36 (strain 81-176).